A 377-amino-acid chain; its full sequence is MGEIQTLNEQHSVGKPVIRLSGISKSFDGKEIIGNLNLDVNHGEFLTILGPSGCGKTTVLRMIAGFETADQGQILLDDQDVTQVPAEQRHVNTVFQSYALFPHMTVFENVAFGLRMQKVPQSEIEPRVMEALRMVRLAEMAQRKPHQLSGGQQQRIAIARAVVNKPKVLLLDESLSALDYKLRKQMQSELKQLQRQLGITFIFVTHDQEEALSMSDRIIVMRSGKIEQDGSPREIYEDPKNLFVARFIGEINVFQATTIDRIDEKRIRVDIEGIESIVYYEDEVKAGDKLQVLLRPEDLRIEEIKESEEKGIVGHVTDRTYKGMTLESVVELESGMCVMVSEFFNEDDPDVDHSIGQKVAVTWVESWEVVLNDEQKA.

An ABC transporter domain is found at I18 to I248. An ATP-binding site is contributed by G50–T57.

The protein belongs to the ABC transporter superfamily. Spermidine/putrescine importer (TC 3.A.1.11.1) family. In terms of assembly, the complex is composed of two ATP-binding proteins (PotA), two transmembrane proteins (PotB and PotC) and a solute-binding protein (PotD).

The protein resides in the cell inner membrane. The enzyme catalyses ATP + H2O + polyamine-[polyamine-binding protein]Side 1 = ADP + phosphate + polyamineSide 2 + [polyamine-binding protein]Side 1.. Part of the ABC transporter complex PotABCD involved in spermidine/putrescine import. Responsible for energy coupling to the transport system. This chain is Spermidine/putrescine import ATP-binding protein PotA, found in Vibrio cholerae serotype O1 (strain ATCC 39315 / El Tor Inaba N16961).